The sequence spans 199 residues: 7-methyl-GTP pyrophosphatase (199 aa).

Aspartate 74 functions as the Proton acceptor in the catalytic mechanism.

It belongs to the Maf family. YceF subfamily. It depends on a divalent metal cation as a cofactor.

It is found in the cytoplasm. The enzyme catalyses N(7)-methyl-GTP + H2O = N(7)-methyl-GMP + diphosphate + H(+). Nucleoside triphosphate pyrophosphatase that hydrolyzes 7-methyl-GTP (m(7)GTP). May have a dual role in cell division arrest and in preventing the incorporation of modified nucleotides into cellular nucleic acids. In Albidiferax ferrireducens (strain ATCC BAA-621 / DSM 15236 / T118) (Rhodoferax ferrireducens), this protein is 7-methyl-GTP pyrophosphatase.